Consider the following 399-residue polypeptide: Acetate kinase (399 aa).

Asn-7 serves as a coordination point for Mg(2+). Lys-14 lines the ATP pocket. Residue Arg-91 participates in substrate binding. The active-site Proton donor/acceptor is the Asp-148. ATP contacts are provided by residues 208-212 (HLGNG) and 283-285 (DFR). Residue Glu-384 participates in Mg(2+) binding.

The protein belongs to the acetokinase family. As to quaternary structure, homodimer. It depends on Mg(2+) as a cofactor. The cofactor is Mn(2+).

The protein localises to the cytoplasm. The enzyme catalyses acetate + ATP = acetyl phosphate + ADP. Its pathway is metabolic intermediate biosynthesis; acetyl-CoA biosynthesis; acetyl-CoA from acetate: step 1/2. Catalyzes the formation of acetyl phosphate from acetate and ATP. Can also catalyze the reverse reaction. In Dictyoglomus thermophilum (strain ATCC 35947 / DSM 3960 / H-6-12), this protein is Acetate kinase.